The sequence spans 1521 residues: Suppressor of Ty 6 homolog (1521 aa).

Residues M1–G238 form a disordered region. A compositionally biased stretch (basic residues) spans K26–M41. The Nuclear localization signal motif lies at K26–V42. Acidic residues-rich tracts occupy residues S45–E56 and A67–A76. The segment covering K77–E89 has biased composition (basic and acidic residues). The segment covering D90–L99 has biased composition (acidic residues). Residues P126–R157 are compositionally biased toward basic and acidic residues. 3 stretches are compositionally biased toward acidic residues: residues R166–G176, N191–A200, and F209–G238. The region spanning L1183–K1252 is the S1 motif domain. In terms of domain architecture, SH2 spans H1300–Q1389.

This sequence belongs to the SPT6 family. As to quaternary structure, interacts with glp-1 and lin-12. In terms of tissue distribution, abundant in embryos, and less abundant in larvae.

It is found in the nucleus. Functionally, histone H3-H4 chaperone that plays a role in maintenance of chromatin structure during RNA polymerase II transcription elongation. Required for several aspects of morphogenesis of C.elegans, including regulation of division in the germline and gut and specification of ventral-uterine precursor cell fate. In Caenorhabditis elegans, this protein is Suppressor of Ty 6 homolog (emb-5).